We begin with the raw amino-acid sequence, 374 residues long: Putative phosphoserine aminotransferase (374 aa).

Residue Arg-48 coordinates L-glutamate. Pyridoxal 5'-phosphate-binding positions include 82–83, Phe-106, Thr-152, Asp-174, and Gln-197; that span reads AT. Lys-198 is modified (N6-(pyridoxal phosphate)lysine). 249–250 is a pyridoxal 5'-phosphate binding site; the sequence is NT.

This sequence belongs to the class-V pyridoxal-phosphate-dependent aminotransferase family. SerC subfamily. As to quaternary structure, homodimer. The cofactor is pyridoxal 5'-phosphate.

The protein localises to the cytoplasm. The catalysed reaction is O-phospho-L-serine + 2-oxoglutarate = 3-phosphooxypyruvate + L-glutamate. The enzyme catalyses 4-(phosphooxy)-L-threonine + 2-oxoglutarate = (R)-3-hydroxy-2-oxo-4-phosphooxybutanoate + L-glutamate. It functions in the pathway amino-acid biosynthesis; L-serine biosynthesis; L-serine from 3-phospho-D-glycerate: step 2/3. Its pathway is cofactor biosynthesis; pyridoxine 5'-phosphate biosynthesis; pyridoxine 5'-phosphate from D-erythrose 4-phosphate: step 3/5. In terms of biological role, catalyzes the reversible conversion of 3-phosphohydroxypyruvate to phosphoserine and of 3-hydroxy-2-oxo-4-phosphonooxybutanoate to phosphohydroxythreonine. The chain is Putative phosphoserine aminotransferase from Mycobacterium avium (strain 104).